Reading from the N-terminus, the 250-residue chain is Pre-protein VI (250 aa).

A propeptide spanning residues 1 to 33 (MEDINFASLAPRHGSRPFMGNWQDIGTSNMSGG) is cleaved from the precursor. An amphipathic alpha-helix essential for membrane lytic activity region spans residues 34 to 54 (AFSWGSLWSGIKNFGSTIKNY). The interval 36-53 (SWGSLWSGIKNFGSTIKN) is involved in endosomal membrane lysis. The interval 48–74 (GSTIKNYGSKAWNSSTGQMLRDKLKEQ) is interaction with hexon protein. Positions 67–76 (LRDKLKEQNF) match the Nuclear export signal motif. The tract at residues 103 to 147 (INSKLDPRPPVEEPPPAVETVSPEGRGEKRPRPDREETLVTQIDE) is disordered. The residue at position 124 (serine 124) is a Phosphoserine; by host. Residues 127-140 (GRGEKRPRPDREET) show a composition bias toward basic and acidic residues. The Nuclear localization signal signature appears at 131–135 (KRPRP). Threonine 143 carries the post-translational modification Phosphothreonine; by host. Residues 148-151 (PPSY) carry the PPXY motif motif. Positions 206–220 (PSRASLRRAASGPRS) are enriched in low complexity. Residues 206-226 (PSRASLRRAASGPRSMRPVAS) are disordered. The Nuclear export signal signature appears at 231 to 242 (STLNSIVGLGVQ). An interaction with hexon protein region spans residues 233-239 (LNSIVGL). Residues 240-250 (GVQSLKRRRCF) are binds to importin alpha/beta, involved in hexon nuclear import. The Nuclear localization signal motif lies at 245–248 (KRRR).

It belongs to the adenoviridae protein VI family. In terms of assembly, interacts with hexon protein; this interaction allows nuclear import of hexon trimers and possibly pre-capsid assembly. Interacts (via C-terminal NLS) with importin alpha/beta. Interacts (via PPxY motif) with host NEDD4 ubiquitine ligase; this interaction might play a role in virus intracellular transport during entry. Part of a complex composed of the core-capsid bridging protein, the endosome lysis protein VI and the hexon-linking protein VIII; these interactions bridge the virus core to the capsid. Interacts with peripentonal hexons; this interaction stabilizes the capsid by gluing two peripentonal hexons together and joining them with an adjacent group-of-nine hexon. As to quaternary structure, heterodimer with the viral protease; disulfide-linked. Interacts with the viral protease. In terms of processing, ubiquitinated by Nedd4 following partial capsid disassembly; which might play a role in intracellular virus movement during entry. Post-translationally, contains the major nuclear import and export signals. Proteolytically removed during virion maturation. The processing of the C-terminus turns the precursor into a mature viral structural protein and abrogates its ability to promote hexon import and act as a potential chaperone protein.

The protein resides in the host nucleus. It localises to the host cytoplasm. Its subcellular location is the virion. Functionally, during virus assembly, promotes hexon trimers nuclear import through nuclear pore complexes via an importin alpha/beta-dependent mechanism. By analogy to herpesviruses capsid assembly, might act as a chaperone to promote the formation of the icosahedral capsid. Its function is as follows. Structural component of the virion that provides increased stability to the particle shell through its interaction with the core-capsid bridging protein and the hexon-linking protein VIII. Fibers shedding during virus entry into host cell allows the endosome lysis protein to be exposed as a membrane-lytic peptide. Exhibits pH-independent membrane fragmentation activity and probably mediates viral rapid escape from host endosome via organellar membrane lysis. It is not clear if it then remains partially associated with the capsid and involved in the intracellular microtubule-dependent transport of capsid to the nucleus, or if it is lost during endosomal penetration. Cofactor that activates the viral protease. Binds to viral protease in a 1:1 ratio. This chain is Pre-protein VI, found in Human adenovirus C serotype 2 (HAdV-2).